A 200-amino-acid polypeptide reads, in one-letter code: Pyridoxal 5'-phosphate synthase subunit PdxT (200 aa).

Residue 52–54 (GES) participates in L-glutamine binding. C84 serves as the catalytic Nucleophile. Residues R116 and 145–146 (IR) each bind L-glutamine. Catalysis depends on charge relay system residues H181 and E183.

The protein belongs to the glutaminase PdxT/SNO family. In the presence of PdxS, forms a dodecamer of heterodimers. Only shows activity in the heterodimer.

The enzyme catalyses aldehydo-D-ribose 5-phosphate + D-glyceraldehyde 3-phosphate + L-glutamine = pyridoxal 5'-phosphate + L-glutamate + phosphate + 3 H2O + H(+). The catalysed reaction is L-glutamine + H2O = L-glutamate + NH4(+). It participates in cofactor biosynthesis; pyridoxal 5'-phosphate biosynthesis. Its function is as follows. Catalyzes the hydrolysis of glutamine to glutamate and ammonia as part of the biosynthesis of pyridoxal 5'-phosphate. The resulting ammonia molecule is channeled to the active site of PdxS. The protein is Pyridoxal 5'-phosphate synthase subunit PdxT of Sulfurisphaera tokodaii (strain DSM 16993 / JCM 10545 / NBRC 100140 / 7) (Sulfolobus tokodaii).